The following is a 1176-amino-acid chain: MSLPNHSGSSAFKSFSYIVGTGIKRAAKLSTRNPIEMIVVVLILSSFSYFYLFNLARTSDIFSGTVTRLYPTSVYAPTKDHSFSVVDRTADSTIANNAVKVHLHQIVVSDPKHGVLSRQTLASVLRFQQMAENEIYVPDSTAVNRFAFNKDLCYKTTLPSSYSSHSSDSNSNSNLNSKTSPCFAHSPADIWQDEATLLADKNIRSTIEANLDTAKNVFGDLQLNATYASSVTLSYAFNTTGDYREHLADMWKHKVATLPPADLVSLSNIGQQENVFAWLFIVTRNVIFRVKELIDLADNIDIIVILVGYIMMIATFISLYVNMRAMGSRYTLATAVVFNGFFSFMLALLTVRALGVDVYPVVLAEAIPFLAVTIGFERPFKLTKRVFQFSKETPLTKQEIRTTIMRAVDTVALPIARDCFMEIIVLVLGAKSGISGLEEFCLLSAILLAYDFIIMFTWYTAVLALKLELLRIREINGISADDIKKGTKKSTGYIRRTVIKAFSDDHAAGANTANQKADGPIIGRVKLLMIVGFVVMHIFKFCSAFQSVGPQVNITEPSIAVVLDQLLEQHKASSQASLPLFVQVFPAMPFHVATVNKSFVPDAITRPLEALFDTYAVYIQHPVISKWLTIALFVSLFLNTYLFNVAKQPKQIVEQVNQDKKITNAIESTNNTHIEVTEKQKPTIQSPGPVVSSAVVMSPNHKRSHNHHHSHSHSHNHHSNHHQSDIVRPIDECVALVRTPEMLNDEEVISLVENGKMASYALEKVLGDLQRAVGIRRALISRASITKTLEASALPLENYHYDKVMGACCENVIGYMPIPVGVAGPMNIDGDLIHIPMATTEGCLVASTARGCKAINAGGGASTIVIADGMTRGPCVEFPTILRAAACKLWIENEGNDIVTNAFNSTSRFARLRKLKIALAGKLVFIRFSTTTGDAMGMNMISKGCEKALSIITEHFPDMQIISLSGNYCTDKKPAAINWIEGRGKSVVTEAVIPGAIVEKVLKTTVAALVELNISKNLIGSAMAGSVGGFNAHAANILTAIYLATGQDPAQNVESSNCITLMKAVNDTKDLHISCTMPSIEVGTIGGGTILPPQQSMLDMLGVRGPHPTEPGKNAQRLARIICAAVMAGELSLCAALAAGHLVKAHMAHNRGTQAPTITSGPAPSTGTEPGTCIKS.

At Met-1 to Pro-34 the chain is on the cytoplasmic side. The chain crosses the membrane as a helical span at residues Ile-35–Leu-55. The Lumenal portion of the chain corresponds to Ala-56–Asn-299. 2 N-linked (GlcNAc...) asparagine glycosylation sites follow: Asn-224 and Asn-238. The chain crosses the membrane as a helical span at residues Ile-300–Tyr-320. An SSD domain is found at Asp-301–Leu-465. The Cytoplasmic segment spans residues Val-321–Tyr-330. The helical transmembrane segment at Thr-331–Val-351 threads the bilayer. Residues Arg-352 to Gly-355 lie on the Lumenal side of the membrane. A helical membrane pass occupies residues Val-356–Phe-376. The Cytoplasmic portion of the chain corresponds to Glu-377–Glu-422. The helical transmembrane segment at Ile-423 to Leu-443 threads the bilayer. Ser-444 is a topological domain (lumenal). The helical transmembrane segment at Ala-445–Leu-465 threads the bilayer. Residues Lys-466–Arg-524 lie on the Cytoplasmic side of the membrane. A helical membrane pass occupies residues Val-525 to Phe-545. Over Gln-546–Pro-622 the chain is Lumenal. Asn-553 and Asn-596 each carry an N-linked (GlcNAc...) asparagine glycan. Residues Val-623–Phe-643 traverse the membrane as a helical segment. Residues Asn-644–Ser-1176 are Cytoplasmic-facing. The interval Pro-699–Ser-724 is disordered. Residues Asn-700–His-721 show a composition bias toward basic residues. The Charge relay system role is filled by Glu-841. Ser-847–Lys-853 contributes to the CoA binding site. NADP(+) contacts are provided by residues Ser-907–Phe-909 and Asp-934–Ser-942. Lys-972 (charge relay system) is an active-site residue. Val-1001–Lys-1003 is a binding site for CoA. Residue Asp-1048 is the Charge relay system of the active site. Ala-1145–His-1146 contacts CoA. Residue His-1146 is the Proton donor of the active site. Asn-1150–Arg-1151 lines the NADP(+) pocket. Residues Thr-1153 to Ser-1176 form a disordered region.

This sequence belongs to the HMG-CoA reductase family.

The protein localises to the endoplasmic reticulum membrane. It carries out the reaction (R)-mevalonate + 2 NADP(+) + CoA = (3S)-3-hydroxy-3-methylglutaryl-CoA + 2 NADPH + 2 H(+). The protein operates within metabolic intermediate biosynthesis; (R)-mevalonate biosynthesis; (R)-mevalonate from acetyl-CoA: step 3/3. Functionally, HMG-CoA reductase; part of the first module of ergosterol biosynthesis pathway that includes the early steps of the pathway, conserved across all eukaryotes, and which results in the formation of mevalonate from acetyl-coenzyme A (acetyl-CoA). In this module, the cytosolic acetyl-CoA acetyltransferase catalyzes the formation of acetoacetyl-CoA. The hydroxymethylglutaryl-CoA synthase then condenses acetyl-CoA with acetoacetyl-CoA to form HMG-CoA. The rate-limiting step of the early module is the reduction to mevalonate by the 3-hydroxy-3-methylglutaryl-coenzyme A (HMG-CoA) reductase hmgA. The protein is 3-hydroxy-3-methylglutaryl-coenzyme A reductase of Phycomyces blakesleeanus (strain ATCC 8743b / DSM 1359 / FGSC 10004 / NBRC 33097 / NRRL 1555).